The sequence spans 55 residues: MKTLSVFLVLVCLLGLVQSWEWPWNRQPTRYPIPSPNPRDKWCRLNLGPAWGGRC.

An N-terminal signal peptide occupies residues 1-19 (MKTLSVFLVLVCLLGLVQS). 4 positions are modified to hydroxyproline: Pro-28, Pro-32, Pro-34, and Pro-38. A disulfide bond links Cys-43 and Cys-55.

As to expression, main cells of the accessory glands of males (paragonial gland).

It localises to the secreted. In terms of biological role, represses female sexual receptivity and stimulates oviposition. This is Accessory gland-specific peptide 70A (Acp70A) from Drosophila sechellia (Fruit fly).